The sequence spans 205 residues: Ras-like protein 3 (205 aa).

16–23 contributes to the GTP binding site; that stretch reads GGGGVGKS. Residues 38–46 carry the Effector region motif; that stretch reads YDPTIEDSY. Residues 63-67 and 122-125 each bind GTP; these read DTAGQ and NKCD. Residue Cys202 is modified to Cysteine methyl ester. Cys202 carries S-farnesyl cysteine lipidation. Residues 203-205 constitute a propeptide, removed in mature form; it reads ILM.

The protein belongs to the small GTPase superfamily. Ras family.

It is found in the cell membrane. The catalysed reaction is GTP + H2O = GDP + phosphate + H(+). Alternates between an inactive form bound to GDP and an active form bound to GTP. Activated by a guanine nucleotide-exchange factor (GEF) and inactivated by a GTPase-activating protein (GAP). This is Ras-like protein 3 (RAS3) from Mucor circinelloides f. lusitanicus (Mucor racemosus var. lusitanicus).